Here is a 426-residue protein sequence, read N- to C-terminus: Protein TolB homolog (426 aa).

The N-terminal stretch at 1-19 is a signal peptide; sequence MFLRSFLCLLCLLPSILYC.

Belongs to the TolB family.

The protein localises to the periplasm. This is Protein TolB homolog from Chlamydia muridarum (strain MoPn / Nigg).